The primary structure comprises 247 residues: Caffeoyl-CoA O-methyltransferase (247 aa).

Lysine 21 contacts substrate. Residues threonine 63, glutamate 85, 87-88 (GV), serine 93, aspartate 111, and alanine 140 each bind S-adenosyl-L-methionine. Aspartate 163 contributes to the substrate binding site. Aspartate 163 contributes to the a divalent metal cation binding site. An S-adenosyl-L-methionine-binding site is contributed by aspartate 165. A divalent metal cation-binding residues include aspartate 189 and asparagine 190. Asparagine 194 serves as a coordination point for substrate.

The protein belongs to the class I-like SAM-binding methyltransferase superfamily. Cation-dependent O-methyltransferase family. CCoAMT subfamily. Requires a divalent metal cation as cofactor.

The enzyme catalyses (E)-caffeoyl-CoA + S-adenosyl-L-methionine = (E)-feruloyl-CoA + S-adenosyl-L-homocysteine + H(+). It functions in the pathway aromatic compound metabolism; phenylpropanoid biosynthesis. In terms of biological role, methylates caffeoyl-CoA to feruloyl-CoA and 5-hydroxyferuloyl-CoA to sinapoyl-CoA. Plays a role in the synthesis of feruloylated polysaccharides. Involved in the reinforcement of the plant cell wall. Also involved in the responding to wounding or pathogen challenge by the increased formation of cell wall-bound ferulic acid polymers. The polypeptide is Caffeoyl-CoA O-methyltransferase (Populus tremuloides (Quaking aspen)).